We begin with the raw amino-acid sequence, 237 residues long: CDP-diacylglycerol--serine O-phosphatidyltransferase (237 aa).

8 helical membrane-spanning segments follow: residues 3-23 (INPLYLFPNLFTASSIFLGMM), 25-45 (IFYASSYQFVMACWLVVASLI), 73-93 (VIAFGVAPSLIAYFYVGYNFG), 95-115 (IGMAVSALFVIFGAIRLARFN), 124-144 (YSFIGIPIPAAAVLVVLCVLL), 150-170 (FLEGNTEKLFLSFIVLLGVLM), 184-204 (WNLKLFILVLIFLSLVFVRPL), and 207-227 (LSVFMGLYLIYGIIRWLFLMV).

Belongs to the CDP-alcohol phosphatidyltransferase class-I family.

The protein localises to the cell membrane. It catalyses the reaction a CDP-1,2-diacyl-sn-glycerol + L-serine = a 1,2-diacyl-sn-glycero-3-phospho-L-serine + CMP + H(+). The protein is CDP-diacylglycerol--serine O-phosphatidyltransferase (pssA) of Helicobacter pylori (strain ATCC 700392 / 26695) (Campylobacter pylori).